The primary structure comprises 442 residues: Glutamate--methylamine ligase (442 aa).

The GS beta-grasp domain maps to 13-97; that stretch reads NQVKYILAQF…IACDGHTHGK (85 aa). A GS catalytic domain is found at 103–442; that stretch reads TRVVLKKQLE…WEVNSYLEFF (340 aa).

This sequence belongs to the glutamine synthetase family. Type 3 subfamily. It depends on Mg(2+) as a cofactor.

It carries out the reaction methylamine + L-glutamate + ATP = N(5)-methyl-L-glutamine + ADP + phosphate + H(+). In terms of biological role, catalyzes the formation of N(5)-methyl-L-glutamine from glutamate and methylamine. The chain is Glutamate--methylamine ligase from Methyloversatilis universalis (strain ATCC BAA-1314 / DSM 25237 / JCM 13912 / CCUG 52030 / FAM5).